The primary structure comprises 261 residues: Immediate-early protein IE-0 (261 aa).

The segment at Cys-212–Arg-257 adopts an RING-type zinc-finger fold.

In terms of assembly, interacts with proteins C42 and FP25. Interacts with host beta-tubulin. Interacts with Ac66 and vUb.

The protein localises to the host nucleus. Its subcellular location is the host cytoplasm. The protein resides in the virion. In terms of biological role, putative viral E3 ligase that plays an essential regulatory role in both viral DNA replication and transcriptional transactivation. The role in transcription has been shown to include activation of gene expression from early viral promoters. Also promotes the efficient egress of nucleocapsids from the host nucleus. May act as an E3 ligase that promotes ubiquitination of nucleocapsids proteins by vUbi and subsequent viral egress for the host nucleus. This chain is Immediate-early protein IE-0 (IE0), found in Lepidoptera (butterflies and moths).